The chain runs to 504 residues: Probable alpha-L-arabinofuranosidase C (504 aa).

Residues asparagine 152, asparagine 181, asparagine 269, and asparagine 467 are each glycosylated (N-linked (GlcNAc...) asparagine).

Belongs to the glycosyl hydrolase 51 family.

It localises to the secreted. The enzyme catalyses Hydrolysis of terminal non-reducing alpha-L-arabinofuranoside residues in alpha-L-arabinosides.. It participates in glycan metabolism; L-arabinan degradation. Its function is as follows. Alpha-L-arabinofuranosidase involved in the degradation of arabinoxylan, a major component of plant hemicellulose. Acts only on small linear 1,5-alpha-linked L-arabinofuranosyl oligosaccharides. This Aspergillus terreus (strain NIH 2624 / FGSC A1156) protein is Probable alpha-L-arabinofuranosidase C (abfC).